We begin with the raw amino-acid sequence, 357 residues long: Golgi to ER traffic protein 2 (357 aa).

Residues 1–224 (MSETTDKQLT…AKYHTYQEQL (224 aa)) lie on the Cytoplasmic side of the membrane. Residues 65–81 (TDTATVTDSSTNATSVS) show a composition bias toward low complexity. The segment at 65–99 (TDTATVTDSSTNATSVSPSAAKATPTSTGVSSAIS) is disordered. Positions 88-98 (TPTSTGVSSAI) are enriched in polar residues. Residues 225 to 245 (WQFRFLVVRILATIFNFAYHF) traverse the membrane as a helical segment. Topologically, residues 246 to 270 (ITIPSFTASNHAYVRDLSEVYPLLG) are lumenal. A helical membrane pass occupies residues 271–290 (FMTIFTSIEVVIIATYYLLF). Topologically, residues 291 to 334 (TKLGLFHASNQKSFILKGISTLSMFVPQLLRYEPLVATFLGYKE) are cytoplasmic. The chain crosses the membrane as a helical span at residues 335 to 355 (LLGIFVGDLSLVVVMFGLLSF). At 356-357 (SN) the chain is on the lumenal side.

It belongs to the GET2 family. Component of the Golgi to ER traffic (GET) complex, which is composed of GET1, GET2 and GET3. Within the complex, GET1 and GET2 form a heterotetramer which is stabilized by phosphatidylinositol binding and which binds to the GET3 homodimer.

It localises to the endoplasmic reticulum membrane. It is found in the golgi apparatus membrane. Functionally, required for the post-translational delivery of tail-anchored (TA) proteins to the endoplasmic reticulum. Together with GET1, acts as a membrane receptor for soluble GET3, which recognizes and selectively binds the transmembrane domain of TA proteins in the cytosol. The GET complex cooperates with the HDEL receptor ERD2 to mediate the ATP-dependent retrieval of resident ER proteins that contain a C-terminal H-D-E-L retention signal from the Golgi to the ER. This is Golgi to ER traffic protein 2 from Lodderomyces elongisporus (strain ATCC 11503 / CBS 2605 / JCM 1781 / NBRC 1676 / NRRL YB-4239) (Yeast).